We begin with the raw amino-acid sequence, 1080 residues long: MPKRTDLETILIIGAGPIVIGQACEFDYSGAQACKALRDEGYRVVLVNSNPATIMTDPNMADAVYIEPINWQTVEKIIAKEKPDALLPTMGGQTALNCALDLADHGVLEKYNVELIGAKREAIRMAEDRELFRVAMGEIGLDCPTAAVAHTLEEALEIQTRVGYPTIIRPSFTLGGSGGGIAYNREELIEIVGRGLELSPTTEVLVEESVLGWKEFEMEVVRDTADNCIIVCAIENLDPMGVHTGDSITVAPAQTLTDKEYQRLRDASIAVLRKIGVDTGGSNVQFGISPTTGRVVVIEMNPRVSRSSALASKATGFPIAKVAAKLAVGYTLDELKNEITGGLTPASFEPSIDYVVTKIPRFAFEKFPQADARLTTQMKSVGEVMAMGRTFSESLQKALRGLETGKIGLDPTGLDLSSEDDIATLKRELKAPGPERLFYVADAFRAGMTVADVYALSFIDPWFLDQIEEIVSHEQQLADDGMAALDAPRLRMLKRAGFSDARMAQLIGSNEESVRTLRRALKVRPVYKRVDSCAAEFATSTAYLYSTYEDECEALPTDRDKIMILGGGPNRIGQGIEFDYCCVHAALALRDDGFETIMVNCNPETVSTDYDTSDRLYFEPLTLEDVLEIVELEKPKGVIVQYGGQTPLKLARALEANGVPVIGTSPDSIDLAEDRERFQQLVDKLGLKQPPNRIARNAEEALVLAREIGYPLVVRPSYVLGGRAMEIVYGESDLARYVRDAVKVSNDSPVLLDRFLDNAVEVDVDIIADKDGNVLIGGVMEHIEEAGVHSGDSSCSLPPYSLSPQTQAELRRQVVMLAEGLNVVGLMNTQFAVQVNEAGDDIVYLLEVNPRASRTVPFVSKAIGMPLAKIAARCMAGKTLAEQGATKEIVPDYYSVKEAIFPFAKFQGVDPILGPEMRSTGEVMGVGRSFSAAFARAQEAGGIKAPPLGKAFVSVRDPDKQRVLPVAQALVERGFTLVATRGTGAWLQQNGLSCEIVNKVAEGRPHIVDSIKNGEIVYIVNTTEGRAAISDSFSIRREALQHRVTYSTTVAGAKALVQSLEFRGTGPVWSLQELHKELEA.

The carboxyphosphate synthetic domain stretch occupies residues 1 to 403 (MPKRTDLETI…SLQKALRGLE (403 aa)). ATP is bound by residues Arg129, Arg169, Gly175, Gly176, Glu208, Val210, Glu215, Gly241, Val242, His243, Gln285, and Glu299. The ATP-grasp 1 domain occupies 133–328 (RVAMGEIGLD…IAKVAAKLAV (196 aa)). Positions 285, 299, and 301 each coordinate Mg(2+). Residues Gln285, Glu299, and Asn301 each coordinate Mn(2+). The oligomerization domain stretch occupies residues 404-554 (TGKIGLDPTG…YSTYEDECEA (151 aa)). Positions 555 to 942 (LPTDRDKIMI…AFARAQEAGG (388 aa)) are carbamoyl phosphate synthetic domain. In terms of domain architecture, ATP-grasp 2 spans 679 to 876 (QQLVDKLGLK…LAKIAARCMA (198 aa)). ATP-binding residues include Arg715, Arg754, Leu756, Glu761, Gly787, Val788, His789, Ser790, Gln830, and Glu847. Mg(2+) contacts are provided by Gln830, Glu847, and Asn849. Residues Gln830, Glu847, and Asn849 each contribute to the Mn(2+) site. The MGS-like domain maps to 943–1080 (IKAPPLGKAF…LQELHKELEA (138 aa)). Residues 943-1080 (IKAPPLGKAF…LQELHKELEA (138 aa)) are allosteric domain.

Belongs to the CarB family. Composed of two chains; the small (or glutamine) chain promotes the hydrolysis of glutamine to ammonia, which is used by the large (or ammonia) chain to synthesize carbamoyl phosphate. Tetramer of heterodimers (alpha,beta)4. Mg(2+) serves as cofactor. Mn(2+) is required as a cofactor.

It carries out the reaction hydrogencarbonate + L-glutamine + 2 ATP + H2O = carbamoyl phosphate + L-glutamate + 2 ADP + phosphate + 2 H(+). The catalysed reaction is hydrogencarbonate + NH4(+) + 2 ATP = carbamoyl phosphate + 2 ADP + phosphate + 2 H(+). It functions in the pathway amino-acid biosynthesis; L-arginine biosynthesis; carbamoyl phosphate from bicarbonate: step 1/1. Its pathway is pyrimidine metabolism; UMP biosynthesis via de novo pathway; (S)-dihydroorotate from bicarbonate: step 1/3. Large subunit of the glutamine-dependent carbamoyl phosphate synthetase (CPSase). CPSase catalyzes the formation of carbamoyl phosphate from the ammonia moiety of glutamine, carbonate, and phosphate donated by ATP, constituting the first step of 2 biosynthetic pathways, one leading to arginine and/or urea and the other to pyrimidine nucleotides. The large subunit (synthetase) binds the substrates ammonia (free or transferred from glutamine from the small subunit), hydrogencarbonate and ATP and carries out an ATP-coupled ligase reaction, activating hydrogencarbonate by forming carboxy phosphate which reacts with ammonia to form carbamoyl phosphate. The polypeptide is Carbamoyl phosphate synthase large chain (Xanthomonas axonopodis pv. citri (strain 306)).